The following is a 208-amino-acid chain: Thymidylate kinase (208 aa).

G10 to T17 contributes to the ATP binding site.

It belongs to the thymidylate kinase family.

The enzyme catalyses dTMP + ATP = dTDP + ADP. In terms of biological role, phosphorylation of dTMP to form dTDP in both de novo and salvage pathways of dTTP synthesis. The chain is Thymidylate kinase from Bacillus cereus (strain ATCC 14579 / DSM 31 / CCUG 7414 / JCM 2152 / NBRC 15305 / NCIMB 9373 / NCTC 2599 / NRRL B-3711).